A 475-amino-acid polypeptide reads, in one-letter code: ATP synthase subunit beta, chloroplastic (475 aa).

156–163 contacts ATP; sequence GGAGVGKT.

Belongs to the ATPase alpha/beta chains family. In terms of assembly, F-type ATPases have 2 components, CF(1) - the catalytic core - and CF(0) - the membrane proton channel. CF(1) has five subunits: alpha(3), beta(3), gamma(1), delta(1), epsilon(1). CF(0) has four main subunits: a(1), b(1), b'(1) and c(9-12).

It is found in the plastid. The protein resides in the chloroplast thylakoid membrane. The enzyme catalyses ATP + H2O + 4 H(+)(in) = ADP + phosphate + 5 H(+)(out). Functionally, produces ATP from ADP in the presence of a proton gradient across the membrane. The catalytic sites are hosted primarily by the beta subunits. This is ATP synthase subunit beta, chloroplastic from Trieres chinensis (Marine centric diatom).